Reading from the N-terminus, the 335-residue chain is Phosphate acyltransferase (335 aa).

Belongs to the PlsX family. In terms of assembly, homodimer. Probably interacts with PlsY.

The protein localises to the cytoplasm. The catalysed reaction is a fatty acyl-[ACP] + phosphate = an acyl phosphate + holo-[ACP]. It functions in the pathway lipid metabolism; phospholipid metabolism. Functionally, catalyzes the reversible formation of acyl-phosphate (acyl-PO(4)) from acyl-[acyl-carrier-protein] (acyl-ACP). This enzyme utilizes acyl-ACP as fatty acyl donor, but not acyl-CoA. This Streptococcus equi subsp. zooepidemicus (strain MGCS10565) protein is Phosphate acyltransferase.